The primary structure comprises 249 residues: Putative S-adenosyl-L-methionine-dependent methyltransferase Mkms_0592 (249 aa).

S-adenosyl-L-methionine-binding positions include Asp-111 and 141–142 (DL).

The protein belongs to the UPF0677 family.

Its function is as follows. Exhibits S-adenosyl-L-methionine-dependent methyltransferase activity. This chain is Putative S-adenosyl-L-methionine-dependent methyltransferase Mkms_0592, found in Mycobacterium sp. (strain KMS).